A 641-amino-acid polypeptide reads, in one-letter code: Lipase (641 aa).

The first 38 residues, 1-38 (MKETKHQHTFSIRKSAYGAASVMVASCIFVIGGGVAEA), serve as a signal peptide directing secretion. Disordered regions lie at residues 41–174 (STTQ…PSVD) and 206–246 (TVSP…KPTV). The segment covering 53-64 (QTSQQETHTHQT) has biased composition (low complexity). The segment covering 73–94 (TPEHVDDSKEATPLPEKAESPK) has biased composition (basic and acidic residues). 2 stretches are compositionally biased toward polar residues: residues 95-106 (TEVTVQPSSHTQ) and 127-139 (PESTIASKSVESN). The segment covering 140–165 (KATENEMSPVEHHASNVEKREDRLET) has biased composition (basic and acidic residues). Residues 227 to 239 (ENTTAQNKFTSQA) show a composition bias toward polar residues. Residue S369 is the Nucleophile of the active site. A Ca(2+)-binding site is contributed by G535. D559 (charge relay system) is an active-site residue. D599 contributes to the Ca(2+) binding site. The active-site Charge relay system is H600. Ca(2+) is bound by residues D602, D607, and D610.

The protein belongs to the AB hydrolase superfamily. Lipase family. Ca(2+) serves as cofactor.

It is found in the secreted. It catalyses the reaction a triacylglycerol + H2O = a diacylglycerol + a fatty acid + H(+). The enzyme catalyses a 1,2-diacyl-sn-glycero-3-phosphocholine + H2O = a 2-acyl-sn-glycero-3-phosphocholine + a fatty acid + H(+). Its function is as follows. Has a broad substrate specificity hydrolyzing a variety of triglycerides and phosphatidylcholines. In Staphylococcus hyicus, this protein is Lipase (lip).